A 1081-amino-acid chain; its full sequence is Cellulose synthase A catalytic subunit 1 [UDP-forming] (1081 aa).

Methionine 1 carries the post-translational modification N-acetylmethionine. At 1–270 (MEASAGLVAG…SRVVPIPSSR (270 aa)) the chain is on the cytoplasmic side. Zn(2+) is bound by residues cysteine 39, cysteine 42, cysteine 58, cysteine 61, cysteine 66, cysteine 69, cysteine 81, and cysteine 84. The segment at 39–85 (CQICGDDVGLAETGDVFVACNECAFPVCRPCYEYERKDGTQCCPQCK) adopts an RING-type; degenerate zinc-finger fold. The tract at residues 118–195 (GANKARHQRH…RQPVPVRIVD (78 aa)) is disordered. The span at 127 to 139 (HGEEFSSSSRHES) shows a compositional bias: basic and acidic residues. Residues 158–168 (PDTQSVRTTSG) are compositionally biased toward polar residues. Residues 271-291 (LTPYRVVIILRLIILCFFLQY) traverse the membrane as a helical segment. Topologically, residues 292-299 (RTTHPVKN) are extracellular. A helical transmembrane segment spans residues 300–320 (AYPLWLTSVICEIWFAFSWLL). Over 321 to 856 (DQFPKWYPIN…LLERIAYINT (536 aa)) the chain is Cytoplasmic. UDP-alpha-D-glucose-binding residues include serine 359, lysine 365, glutamate 366, and aspartate 395. Aspartate 395 is an active-site residue. The stretch at 449-476 (VKERRAMKREYEEFKVRINALVAKAQKI) forms a coiled coil. Lysine 536 contacts UDP-alpha-D-glucose. Mn(2+) is bound by residues lysine 537 and aspartate 561. Residue aspartate 780 is part of the active site. A helical transmembrane segment spans residues 857–877 (IVYPITSIPLIAYCILPAFCL). At 878 to 889 (ITDRFIIPEISN) the chain is on the extracellular side. A helical membrane pass occupies residues 890-910 (YASIWFILLFISIAVTGILEL). At 911-925 (RWSGVSIEDWWRNEQ) the chain is on the cytoplasmic side. A helical membrane pass occupies residues 926 to 946 (FWVIGGTSAHLFAVFQGLLKV). Topologically, residues 947 to 976 (LAGIDTNFTVTSKATDEDGDFAELYIFKWT) are extracellular. The N-linked (GlcNAc...) asparagine glycan is linked to asparagine 953. Residues 977-997 (ALLIPPTTVLLVNLIGIVAGV) traverse the membrane as a helical segment. Over 998–1008 (SYAVNSGYQSW) the chain is Cytoplasmic. The chain crosses the membrane as a helical span at residues 1009–1029 (GPLFGKLFFALWVIAHLYPFL). Topologically, residues 1030–1038 (KGLLGRQNR) are extracellular. A helical membrane pass occupies residues 1039–1059 (TPTIVIVWSVLLASIFSLLWV). Over 1060–1081 (RINPFVDANPNANNFNGKGGVF) the chain is Cytoplasmic.

The protein belongs to the glycosyltransferase 2 family. Plant cellulose synthase subfamily. Interacts with CESA3 and CESA6. Assembly with CESA3 and CESA6 is required for functional complex in primary cell wall cellulose synthesis. Interacts with STL1 and STL2, but not with GOT1. Binds to CSI1. Interacts with PAT24/TIP1. Zn(2+) is required as a cofactor. Mn(2+) serves as cofactor. S-acylated. As to expression, expressed in germinating seeds, seedlings, roots, stems, shoots leaves and flowers, but not in mature flowers.

Its subcellular location is the cell membrane. It catalyses the reaction [(1-&gt;4)-beta-D-glucosyl](n) + UDP-alpha-D-glucose = [(1-&gt;4)-beta-D-glucosyl](n+1) + UDP + H(+). Its pathway is glycan metabolism; plant cellulose biosynthesis. In terms of biological role, catalytic subunit of cellulose synthase terminal complexes ('rosettes'), required for beta-1,4-glucan microfibril crystallization, a major mechanism of the cell wall formation. Involved in the primary cell wall formation. Required during embryogenesis for cell elongation, orientation of cell expansion and complex cell wall formations, such as interdigitated pattern of epidermal pavement cells, stomatal guard cells and trichomes. Plays a role in lateral roots formation, but seems not necessary for the development of tip-growing cells such as root hairs. The presence of each protein CESA1 and CESA6 is critical for cell expansion after germination. This is Cellulose synthase A catalytic subunit 1 [UDP-forming] from Arabidopsis thaliana (Mouse-ear cress).